The following is a 198-amino-acid chain: Superoxide dismutase [Fe] (198 aa).

Residues histidine 27, histidine 74, aspartate 158, and histidine 162 each contribute to the Fe cation site.

This sequence belongs to the iron/manganese superoxide dismutase family. Homodimer. It depends on Fe cation as a cofactor.

The protein resides in the cytoplasm. The enzyme catalyses 2 superoxide + 2 H(+) = H2O2 + O2. Functionally, destroys superoxide anion radicals which are normally produced within the cells and which are toxic to biological systems. In Plasmodium falciparum (isolate HB3), this protein is Superoxide dismutase [Fe] (SODB).